The primary structure comprises 714 residues: Pre-mRNA-splicing factor CLF1 (714 aa).

12 HAT repeats span residues 48-80 (SFQL…WEVK), 83-115 (HDFP…FELS), 117-149 (KNIT…TEET), 151-182 (KNYQ…YEKR), 184-215 (DEYD…FEMN), 265-305 (KEYE…FEKS), 315-347 (SIMI…ILQQ), 349-384 (DNNE…IWVK), 394-430 (GSIE…FEIR), 435-470 (NGLA…LEQK), 472-510 (GEWD…FEKN), and 555-586 (MRYA…FESS).

This sequence belongs to the crooked-neck family. In terms of assembly, associated with the spliceosome.

It is found in the nucleus. Functionally, involved in pre-mRNA splicing and cell cycle progression. Required for the spliceosome assembly and initiation of the DNA replication. This chain is Pre-mRNA-splicing factor CLF1 (CLF1), found in Debaryomyces hansenii (strain ATCC 36239 / CBS 767 / BCRC 21394 / JCM 1990 / NBRC 0083 / IGC 2968) (Yeast).